Consider the following 1040-residue polypeptide: Beta-galactosidase (1040 aa).

Substrate is bound by residues Asn111 and Asp210. Asp210 contacts Na(+). Residues Glu427, His429, and Glu472 each coordinate Mg(2+). Substrate contacts are provided by residues Glu472 and 548–551 (EYAH). Catalysis depends on Glu472, which acts as the Proton donor. The active-site Nucleophile is the Glu548. Mg(2+) is bound at residue Asn608. Na(+) is bound by residues Phe612 and Asp615. The substrate site is built by Asp615 and Trp1016.

The protein belongs to the glycosyl hydrolase 2 family. In terms of assembly, homotetramer. Requires Mg(2+) as cofactor. The cofactor is Na(+).

The enzyme catalyses Hydrolysis of terminal non-reducing beta-D-galactose residues in beta-D-galactosides.. The chain is Beta-galactosidase from Pectobacterium atrosepticum (strain SCRI 1043 / ATCC BAA-672) (Erwinia carotovora subsp. atroseptica).